Consider the following 208-residue polypeptide: Transmembrane protein 222 (208 aa).

A disordered region spans residues 1 to 26 (MAEAEGSSLLLLPPPPPPPRMAEVEA). Residues 1–55 (MAEAEGSSLLLLPPPPPPPRMAEVEAPTAAETDMKQYQGSGGVAMDVERSRFPYC) lie on the Extracellular side of the membrane. The helical transmembrane segment at 56–76 (VVWTPIPVLTWFFPIIGHMGI) threads the bilayer. Residues 77–164 (CTSTGVIRDF…MRYNNSTNWN (88 aa)) lie on the Cytoplasmic side of the membrane. The helical transmembrane segment at 165-185 (MVTLCFFCLLYGKYVSVGAFV) threads the bilayer. Residue Lys-186 is a topological domain, extracellular. Residues 187-207 (TWLPFILLLGIILTVSLVFNL) form a helical membrane-spanning segment. Position 208 (Arg-208) is a topological domain, cytoplasmic.

In terms of tissue distribution, widely expressed. The highest expression is observed in the brain.

It is found in the membrane. The protein localises to the cell projection. It localises to the dendrite. This Homo sapiens (Human) protein is Transmembrane protein 222 (TMEM222).